The chain runs to 271 residues: Orotidine 5'-phosphate decarboxylase (271 aa).

Lys-95 acts as the Proton donor in catalysis.

Belongs to the OMP decarboxylase family. Type 2 subfamily.

The enzyme catalyses orotidine 5'-phosphate + H(+) = UMP + CO2. Its pathway is pyrimidine metabolism; UMP biosynthesis via de novo pathway; UMP from orotate: step 2/2. This is Orotidine 5'-phosphate decarboxylase from Janthinobacterium sp. (strain Marseille) (Minibacterium massiliensis).